The primary structure comprises 67 residues: Small ribosomal subunit protein eS17 (67 aa).

The protein belongs to the eukaryotic ribosomal protein eS17 family. Part of the 30S ribosomal subunit.

In Thermococcus kodakarensis (strain ATCC BAA-918 / JCM 12380 / KOD1) (Pyrococcus kodakaraensis (strain KOD1)), this protein is Small ribosomal subunit protein eS17.